The following is a 358-amino-acid chain: Peptide chain release factor 1 (358 aa).

Position 233 is an N5-methylglutamine (Q233).

This sequence belongs to the prokaryotic/mitochondrial release factor family. Methylated by PrmC. Methylation increases the termination efficiency of RF1.

Its subcellular location is the cytoplasm. Functionally, peptide chain release factor 1 directs the termination of translation in response to the peptide chain termination codons UAG and UAA. This is Peptide chain release factor 1 from Staphylococcus aureus (strain MRSA252).